Reading from the N-terminus, the 411-residue chain is G2/mitotic-specific cyclin cig2 (411 aa).

Positions 51 to 60 (RTVLSDVSNV) match the Destruction box motif. The disordered stretch occupies residues 57–89 (VSNVGKNNADEKDTKKAKRSFDESNLSTNEEAD). A compositionally biased stretch (basic and acidic residues) spans 64 to 78 (NADEKDTKKAKRSFD). The Cyclin N-terminal domain maps to 139–265 (EIFEYIRKLD…MLNVLNFDLS (127 aa)). Residues 181 to 273 (SNFCLMPETL…LSYPSPLNFL (93 aa)) form an interaction with pop1 region.

This sequence belongs to the cyclin family. Cyclin AB subfamily. In terms of assembly, associates with cdc2, res2 and rum1. Interacts with pop1 only when phosphorylated. Post-translationally, phosphorylated.

Its subcellular location is the nucleus. It localises to the cytoplasm. It is found in the cytoskeleton. The protein localises to the microtubule organizing center. The protein resides in the spindle pole body. Functionally, essential for the control of the cell cycle at the G2/M and G1/S (mitosis) transition. Interacts with the cdc2 protein kinase to form MPF. Interaction with res2 promotes the phosphorylation of res1 and inhibits MBF-dependent gene transcription. Forms an autoregulating feedback-inhibition loop with MBF which is important for normal regulation of the cell cycle. G2/M cyclins accumulate steadily during G2 and are abruptly destroyed at mitosis. Negatively regulates conjugation via interacting with cell cycle 'start' genes. Degraded by skp1, pop1 and pop2 in the G2 and M phases of the cell cycle. The chain is G2/mitotic-specific cyclin cig2 (cig2) from Schizosaccharomyces pombe (strain 972 / ATCC 24843) (Fission yeast).